We begin with the raw amino-acid sequence, 197 residues long: V-type ATP synthase subunit E 2 (197 aa).

The protein belongs to the V-ATPase E subunit family.

Functionally, produces ATP from ADP in the presence of a proton gradient across the membrane. This chain is V-type ATP synthase subunit E 2, found in Clostridium tetani (strain Massachusetts / E88).